A 578-amino-acid polypeptide reads, in one-letter code: MGIKYLPVSVASTALSFVGLQVWTELSLDRLRADGLIAKNISLGDSEHALELLLGSYFTIALLTNFVLNVYILLVLSLKTLFFGDLYDVETKKLVERLANYIIYKGTFLPLVIPPTIFQGVLWTVWLTVLCTLKMFQALARDRLERLNASPSSTPWTYFRVYSVLFLVLSVDMFWIKLSLMTYNTIGSAVYLLLLFEPCSIAFETLQALLIHGFQLLDMWINHLAVKNSDCQRSKFIDSMTAGSLLEWKGLLNRNLGFFLDMATLVMALGHYLHIWWLHGIAFHLVDAVLFLNIRALLSAILKRIKGYIKLRIALGALHAALPDATSEELRAYDDECAICREPMAKAKRLHCNHLFHLGCLRSWLDQGLNEVYSCPTCRKPLFVGRTENEVNPRTVEVSSDEQLARQLERQNNPVHALATGLFPAEVPDSVENDTSRNLGLDPSWLQTWSSQGSDVAGPSTTSRTVGLGRVQMMMRHLASVGESYAQTALDDAAWSLWPMNPSQASTSSTTVPPGNGGRTGGLHLRTVSNTTNESLTNILAMAETVREVMPHVPDEIIFQDLQRTNSVAVTVNNLLQM.

The next 6 membrane-spanning stretches (helical) occupy residues 6–26 (LPVS…WTEL), 58–78 (FTIA…VLSL), 111–131 (LVIP…TVLC), 161–181 (VYSV…LSLM), 186–206 (IGSA…FETL), and 272–292 (YLHI…VLFL). The RING-type; atypical zinc finger occupies 337–379 (CAICREPMAKAKRLHCNHLFHLGCLRSWLDQGLNEVYSCPTCR). Residues 504 to 513 (QASTSSTTVP) are compositionally biased toward polar residues. Residues 504 to 524 (QASTSSTTVPPGNGGRTGGLH) form a disordered region. The CUE domain maps to 538–578 (NILAMAETVREVMPHVPDEIIFQDLQRTNSVAVTVNNLLQM).

As to quaternary structure, interacts (via C-terminus) with RPM1 (via N-terminus).

Its subcellular location is the membrane. It catalyses the reaction S-ubiquitinyl-[E2 ubiquitin-conjugating enzyme]-L-cysteine + [acceptor protein]-L-lysine = [E2 ubiquitin-conjugating enzyme]-L-cysteine + N(6)-ubiquitinyl-[acceptor protein]-L-lysine.. Its pathway is protein modification; protein ubiquitination. E3 ubiquitin protein ligase that acts as a positive regulator of RPM1- and RPS2-dependent hypersensitive response (HR), in association with RIN3. Probably not required for RPM1 degradation during HR. This is E3 ubiquitin protein ligase RIN2 (RIN2) from Arabidopsis thaliana (Mouse-ear cress).